A 155-amino-acid polypeptide reads, in one-letter code: Small ribosomal subunit protein uS7 (155 aa).

This sequence belongs to the universal ribosomal protein uS7 family. As to quaternary structure, part of the 30S ribosomal subunit. Contacts proteins S9 and S11.

Its function is as follows. One of the primary rRNA binding proteins, it binds directly to 16S rRNA where it nucleates assembly of the head domain of the 30S subunit. Is located at the subunit interface close to the decoding center, probably blocks exit of the E-site tRNA. The protein is Small ribosomal subunit protein uS7 of Xylella fastidiosa (strain M12).